Consider the following 146-residue polypeptide: UPF0742 protein PB2B2.17c (146 aa).

The chain crosses the membrane as a helical span at residues 38 to 60 (LTVKYCLAVKLLIYLLYCWYIYS).

It belongs to the UPF0742 family.

Its subcellular location is the cytoplasm. The protein localises to the nucleus membrane. This Schizosaccharomyces pombe (strain 972 / ATCC 24843) (Fission yeast) protein is UPF0742 protein PB2B2.17c.